Reading from the N-terminus, the 336-residue chain is tRNA N6-adenosine threonylcarbamoyltransferase (336 aa).

Fe cation contacts are provided by H111 and H115. Residues V134–G138, D167, G180, D184, and N272 contribute to the substrate site. Position 300 (D300) interacts with Fe cation.

Belongs to the KAE1 / TsaD family. The cofactor is Fe(2+).

Its subcellular location is the cytoplasm. It catalyses the reaction L-threonylcarbamoyladenylate + adenosine(37) in tRNA = N(6)-L-threonylcarbamoyladenosine(37) in tRNA + AMP + H(+). Required for the formation of a threonylcarbamoyl group on adenosine at position 37 (t(6)A37) in tRNAs that read codons beginning with adenine. Is involved in the transfer of the threonylcarbamoyl moiety of threonylcarbamoyl-AMP (TC-AMP) to the N6 group of A37, together with TsaE and TsaB. TsaD likely plays a direct catalytic role in this reaction. The polypeptide is tRNA N6-adenosine threonylcarbamoyltransferase (Caldicellulosiruptor saccharolyticus (strain ATCC 43494 / DSM 8903 / Tp8T 6331)).